We begin with the raw amino-acid sequence, 425 residues long: Cytokine receptor-like factor 1 (425 aa).

The signal sequence occupies residues M1–G33. Positions P35–V134 constitute an Ig-like C2-type domain. Residues N95, N107, and N143 are each glycosylated (N-linked (GlcNAc...) asparagine). Fibronectin type-III domains follow at residues K140–V235 and P240–S344. C146 and C156 are disulfide-bonded. Residue N171 is glycosylated (N-linked (GlcNAc...) asparagine). C187 and C198 are disulfide-bonded. S222 is modified (phosphoserine). An N-linked (GlcNAc...) asparagine glycan is attached at N295. A WSXWS motif motif is present at residues W330–S334. The tract at residues H335–V366 is disordered. N385 carries N-linked (GlcNAc...) asparagine glycosylation. A disordered region spans residues H402–G425. Over residues G415–G425 the composition is skewed to low complexity.

Belongs to the type I cytokine receptor family. Type 3 subfamily. As to quaternary structure, forms covalent di- and tetramers. Forms a heteromeric complex with cardiotrophin-like cytokine CLCF1/CLC; the CRLF1-CLCF1 complex is a ligand for the ciliary neurotrophic factor receptor/CNTFR. The CRLF1-CLCF1 heterodimer, as well as tripartite signaling complex formed by CRLF1, CLCF1 and CNTFR bind SORL1 (via N-terminal ectodomain); within this complex, the interaction is mediated predominantly by the CRLF1 moiety. Widely expressed in the embryo. Not detected in the brain of adult mice.

It is found in the secreted. In complex with CLCF1, forms a heterodimeric neurotropic cytokine that plays a crucial role during neuronal development. Plays a role in the initiation and/or maintenance of suckling in neonatal mice. May also play a regulatory role in the immune system. The protein is Cytokine receptor-like factor 1 (Crlf1) of Mus musculus (Mouse).